We begin with the raw amino-acid sequence, 168 residues long: Crossover junction endodeoxyribonuclease RuvC (168 aa).

Residues D8, E68, and D140 contribute to the active site. Mg(2+)-binding residues include D8, E68, and D140.

Belongs to the RuvC family. As to quaternary structure, homodimer which binds Holliday junction (HJ) DNA. The HJ becomes 2-fold symmetrical on binding to RuvC with unstacked arms; it has a different conformation from HJ DNA in complex with RuvA. In the full resolvosome a probable DNA-RuvA(4)-RuvB(12)-RuvC(2) complex forms which resolves the HJ. Mg(2+) is required as a cofactor.

The protein resides in the cytoplasm. The enzyme catalyses Endonucleolytic cleavage at a junction such as a reciprocal single-stranded crossover between two homologous DNA duplexes (Holliday junction).. The RuvA-RuvB-RuvC complex processes Holliday junction (HJ) DNA during genetic recombination and DNA repair. Endonuclease that resolves HJ intermediates. Cleaves cruciform DNA by making single-stranded nicks across the HJ at symmetrical positions within the homologous arms, yielding a 5'-phosphate and a 3'-hydroxyl group; requires a central core of homology in the junction. The consensus cleavage sequence is 5'-(A/T)TT(C/G)-3'. Cleavage occurs on the 3'-side of the TT dinucleotide at the point of strand exchange. HJ branch migration catalyzed by RuvA-RuvB allows RuvC to scan DNA until it finds its consensus sequence, where it cleaves and resolves the cruciform DNA. The chain is Crossover junction endodeoxyribonuclease RuvC from Lawsonia intracellularis (strain PHE/MN1-00).